Reading from the N-terminus, the 278-residue chain is HTH-type transcriptional activator RhaS (278 aa).

The HTH araC/xylS-type domain maps to 174 to 272 (NLLLAWLEDH…NWSPRDIRQG (99 aa)). 2 DNA-binding regions (H-T-H motif) span residues 191–212 (DAVA…KQQT) and 239–262 (VTDI…RREF).

As to quaternary structure, binds DNA as a dimer.

The protein localises to the cytoplasm. In terms of biological role, activates expression of the rhaBAD and rhaT operons. This chain is HTH-type transcriptional activator RhaS, found in Escherichia coli (strain SE11).